A 305-amino-acid chain; its full sequence is Probable lipid kinase YegS-like (305 aa).

In terms of domain architecture, DAGKc spans 1–129 (MSERKALLIL…IDLGEVGGQI (129 aa)). ATP contacts are provided by residues T39, 65 to 71 (GDGTLRD), and T92. Mg(2+) contacts are provided by L210, D213, and L215. The Proton acceptor role is filled by E268.

The protein belongs to the diacylglycerol/lipid kinase family. YegS lipid kinase subfamily. It depends on Mg(2+) as a cofactor. Requires Ca(2+) as cofactor.

It is found in the cytoplasm. Functionally, probably phosphorylates lipids; the in vivo substrate is unknown. The polypeptide is Probable lipid kinase YegS-like (Pseudomonas fluorescens (strain Pf0-1)).